A 396-amino-acid polypeptide reads, in one-letter code: Phosphoglycerate kinase (396 aa).

Substrate is bound by residues 21-23 (DFN), R36, 59-62 (HLGK), R119, and R156. ATP is bound by residues K206, E325, and 352-355 (GGDS).

This sequence belongs to the phosphoglycerate kinase family. Monomer.

The protein localises to the cytoplasm. The catalysed reaction is (2R)-3-phosphoglycerate + ATP = (2R)-3-phospho-glyceroyl phosphate + ADP. It functions in the pathway carbohydrate degradation; glycolysis; pyruvate from D-glyceraldehyde 3-phosphate: step 2/5. The chain is Phosphoglycerate kinase from Staphylococcus epidermidis (strain ATCC 35984 / DSM 28319 / BCRC 17069 / CCUG 31568 / BM 3577 / RP62A).